The sequence spans 653 residues: MLLRYRIPEILRIRSPLKKWYSTVKPMSAAEEMRLKISQEQTRKAIQERIDKIPIENYRNFSIVAHVDHGKSTLSDRLLELTGVIQPGMKAQVLDKLEVERERGITVKAQTVSMFYNDGNQDYLLHLVDTPGHVDFRAEVSRSYASCGGALLLVDASQGVQAQTVANFYLAYSMGLKLIPIINKIDLDSANIPGAMEQVETTFELDSNDCIAVSAKTGLNVEQIIPSIIKNIPAPNCDETKPLRALLVDSWHDPYVGVVMLLHIVDGKLKKGMKIVSAHSNKAYDVKEVGIMYPDRTPMDHIKAGQVAYIIPGMKNPREALVGDTFYQLGKSEGLEPLPGFEEPKPMVFVGAFPADGREFNAMDDQMQNLVLNDRAVTLEQETSNALGLGWRLGFLGSLHASVFKERLEKEYGAQIILTAPTVPYKIFYKNGTEKVITNPDEFPDNTRHHDVEKYLEPYVEAIMTVPEEYMGNVMTLCLNNRGEQKDIEYLTTGQVLLKYEIPLSQLVEDFFGKLKGCTKGYASLDYEEAGYKKSDIVKLELCVNGEPQDALTTIIHKSQAQARGKEYVSKFKKYLKNQLFEVAIQAKVNNKVVARETIKARRKDVTQRLHAADISRYKKLLERQKEGKKQMKATGKVHIKNDAYQAFLRRDD.

The region spanning 56–236 (ENYRNFSIVA…SIIKNIPAPN (181 aa)) is the tr-type G domain. GTP-binding positions include 65-72 (AHVDHGKS), 129-133 (DTPGH), and 183-186 (NKID).

Belongs to the TRAFAC class translation factor GTPase superfamily. Classic translation factor GTPase family. LepA subfamily.

The protein resides in the mitochondrion inner membrane. The enzyme catalyses GTP + H2O = GDP + phosphate + H(+). Functionally, promotes mitochondrial protein synthesis. May act as a fidelity factor of the translation reaction, by catalyzing a one-codon backward translocation of tRNAs on improperly translocated ribosomes. Binds to mitochondrial ribosomes in a GTP-dependent manner. The sequence is that of Translation factor GUF1, mitochondrial from Candida tropicalis (strain ATCC MYA-3404 / T1) (Yeast).